A 205-amino-acid polypeptide reads, in one-letter code: dITP/XTP pyrophosphatase (205 aa).

Residue 16–21 (TGNPGK) coordinates substrate. Mg(2+) is bound by residues Glu48 and Asp77. The active-site Proton acceptor is Asp77. Substrate is bound by residues Ser78, 162 to 165 (FGYD), Lys185, and 190 to 191 (HR).

The protein belongs to the HAM1 NTPase family. In terms of assembly, homodimer. It depends on Mg(2+) as a cofactor.

It carries out the reaction XTP + H2O = XMP + diphosphate + H(+). The catalysed reaction is dITP + H2O = dIMP + diphosphate + H(+). It catalyses the reaction ITP + H2O = IMP + diphosphate + H(+). Functionally, pyrophosphatase that catalyzes the hydrolysis of nucleoside triphosphates to their monophosphate derivatives, with a high preference for the non-canonical purine nucleotides XTP (xanthosine triphosphate), dITP (deoxyinosine triphosphate) and ITP. Seems to function as a house-cleaning enzyme that removes non-canonical purine nucleotides from the nucleotide pool, thus preventing their incorporation into DNA/RNA and avoiding chromosomal lesions. In Erwinia tasmaniensis (strain DSM 17950 / CFBP 7177 / CIP 109463 / NCPPB 4357 / Et1/99), this protein is dITP/XTP pyrophosphatase.